We begin with the raw amino-acid sequence, 188 residues long: Elongation factor P (188 aa).

The protein belongs to the elongation factor P family.

The protein resides in the cytoplasm. Its pathway is protein biosynthesis; polypeptide chain elongation. Involved in peptide bond synthesis. Stimulates efficient translation and peptide-bond synthesis on native or reconstituted 70S ribosomes in vitro. Probably functions indirectly by altering the affinity of the ribosome for aminoacyl-tRNA, thus increasing their reactivity as acceptors for peptidyl transferase. This is Elongation factor P (efp) from Rickettsia prowazekii (strain Madrid E).